The primary structure comprises 535 residues: Alpha-1,3-mannosyl-glycoprotein 4-beta-N-acetylglucosaminyltransferase A (535 aa).

Residues 1–6 (MRLRNG) are Cytoplasmic-facing. The chain crosses the membrane as a helical; Signal-anchor for type II membrane protein span at residues 7-27 (TVATALVFVTSFLTLSWYTTW). The stretch at 28-63 (QNGKEKLIAYQREFLALKERLRVAEHRISQRSSELN) forms a coiled coil. The Lumenal portion of the chain corresponds to 28–535 (QNGKEKLIAY…NEIHIKKVTS (508 aa)). N-linked (GlcNAc...) asparagine glycosylation is found at N77 and N458. S474 is modified (phosphoserine).

The protein belongs to the glycosyltransferase 54 family. A divalent metal cation is required as a cofactor. In terms of processing, N-glycosylated.

The protein localises to the golgi apparatus membrane. It localises to the secreted. It catalyses the reaction N(4)-{beta-D-GlcNAc-(1-&gt;2)-alpha-D-Man-(1-&gt;3)-[beta-D-GlcNAc-(1-&gt;2)-alpha-D-Man-(1-&gt;6)]-beta-D-Man-(1-&gt;4)-beta-D-GlcNAc-(1-&gt;4)-beta-D-GlcNAc}-L-asparaginyl-[protein] + UDP-N-acetyl-alpha-D-glucosamine = N(4)-{beta-D-GlcNAc-(1-&gt;2)-[beta-D-GlcNAc-(1-&gt;4)]-alpha-D-Man-(1-&gt;3)-[beta-D-GlcNAc-(1-&gt;2)-alpha-D-Man-(1-&gt;6)]-beta-D-Man-(1-&gt;4)-beta-D-GlcNAc-(1-&gt;4)-beta-D-GlcNAc}-L-asparaginyl-[protein] + UDP + H(+). The catalysed reaction is an N(4)-{beta-D-GlcNAc-(1-&gt;2)-alpha-D-Man-(1-&gt;3)-[alpha-D-Man-(1-&gt;6)]-beta-D-Man-(1-&gt;4)-beta-D-GlcNAc-(1-&gt;4)-beta-D-GlcNAc}-L-asparaginyl-[protein] + UDP-N-acetyl-alpha-D-glucosamine = an N(4)-{beta-D-GlcNAc-(1-&gt;2)-[beta-D-GlcNAc-(1-&gt;4)]-alpha-D-Man-(1-&gt;3)-[alpha-D-Man-(1-&gt;6)]-beta-D-Man-(1-&gt;4)-beta-D-GlcNAc-(1-&gt;4)-beta-D-GlcNAc}-L-asparaginyl-[protein] + UDP + H(+). The enzyme catalyses an N(4)-{beta-D-GlcNAc-(1-&gt;2)-alpha-D-Man-(1-&gt;3)-[beta-D-GlcNAc-(1-&gt;2)-[beta-D-GlcNAc-(1-&gt;6)]-alpha-D-Man-(1-&gt;6)]-beta-D-Man-(1-&gt;4)-beta-D-GlcNAc-(1-&gt;4)-beta-D-GlcNAc}-L-asparaginyl-[protein] + UDP-N-acetyl-alpha-D-glucosamine = an N(4)-{beta-D-GlcNAc-(1-&gt;2)-[beta-D-GlcNAc-(1-&gt;4)]-alpha-D-Man-(1-&gt;3)-[beta-D-GlcNAc-(1-&gt;2)-[beta-D-GlcNAc-(1-&gt;6)]-alpha-D-Man-(1-&gt;6)]-beta-D-Man-(1-&gt;4)-beta-D-GlcNAc-(1-&gt;4)-beta-D-GlcNAc}-L-asparaginyl-[protein] + UDP + H(+). It carries out the reaction an N(4)-{beta-D-GlcNAc-(1-&gt;2)-alpha-D-Man-(1-&gt;3)-[beta-D-GlcNAc-(1-&gt;2)-alpha-D-Man-(1-&gt;6)]-beta-D-Man-(1-&gt;4)-beta-D-GlcNAc-(1-&gt;4)-[alpha-L-Fuc-(1-&gt;6)]-beta-D-GlcNAc}-L-asparaginyl-[protein] + UDP-N-acetyl-alpha-D-glucosamine = N(4)-{beta-D-GlcNAc-(1-&gt;2)-[beta-D-GlcNAc-(1-&gt;4)]-alpha-D-Man-(1-&gt;3)-[beta-D-GlcNAc-(1-&gt;2)-alpha-D-Man-(1-&gt;6)]-beta-D-Man-(1-&gt;4)-beta-D-GlcNAc-(1-&gt;4)-[alpha-L-Fuc-(1-&gt;6)]-beta-D-GlcNAc}-asparaginyl-[protein] + UDP + H(+). It catalyses the reaction an N(4)-{beta-D-GlcNAc-(1-&gt;2)-alpha-D-Man-(1-&gt;3)-[beta-D-Gal-(1-&gt;4)-beta-D-GlcNAc-(1-&gt;2)-alpha-D-Man-(1-&gt;6)]-beta-D-Man-(1-&gt;4)-beta-D-GlcNAc-(1-&gt;4)-beta-D-GlcNAc}-L-asparaginyl-[protein] + UDP-N-acetyl-alpha-D-glucosamine = an N(4)-{beta-D-GlcNAc-(1-&gt;2)-[beta-D-GlcNAc-(1-&gt;4)]-alpha-D-Man-(1-&gt;3)-[beta-D-Gal-(1-&gt;4)-beta-D-GlcNAc-(1-&gt;2)-alpha-D-Man-(1-&gt;6)]-beta-D-Man-(1-&gt;4)-beta-D-GlcNAc-(1-&gt;4)-beta-D-GlcNAc}-L-asparaginyl-[protein] + UDP + H(+). The catalysed reaction is N(4)-{beta-D-GlcNAc-(1-&gt;2)-alpha-D-Man-(1-&gt;3)-[alpha-D-Man-(1-&gt;3)-{alpha-D-Man-(1-&gt;6)}-alpha-D-Man-(1-&gt;6)]-beta-D-Man-(1-&gt;4)-beta-D-GlcNAc-(1-&gt;4)-beta-D-GlcNAc}-asparaginyl-[protein] + UDP-N-acetyl-alpha-D-glucosamine = N(4)-{beta-D-GlcNAc-(1-&gt;2)-[beta-D-GlcNAc-(1-&gt;4)]-alpha-D-Man-(1-&gt;3)-[alpha-D-Man-(1-&gt;3)-{alpha-D-Man-(1-&gt;6)}-alpha-D-Man-(1-&gt;6)]-beta-D-Man-(1-&gt;4)-beta-D-GlcNAc-(1-&gt;4)-beta-D-GlcNAc}-asparaginyl-[protein] + UDP + H(+). The enzyme catalyses N(4)-{beta-D-GlcNAc-(1-&gt;2)-alpha-D-Man-(1-&gt;3)-beta-D-Man-(1-&gt;4)-beta-D-GlcNAc-(1-&gt;4)-beta-D-GlcNAc}-asparaginyl-[protein] + UDP-N-acetyl-alpha-D-glucosamine = N(4)-{beta-D-GlcNAc-(1-&gt;2)-[beta-D-GlcNAc-(1-&gt;4)]-alpha-D-Man-(1-&gt;3)-beta-D-Man-(1-&gt;4)-beta-D-GlcNAc-(1-&gt;4)-beta-D-GlcNAc}-asparaginyl-[protein] + UDP + H(+). The protein operates within protein modification; protein glycosylation. Its activity is regulated as follows. Inhibited by UDP. Its function is as follows. Glycosyltransferase that catalyze the transfer of GlcNAc from UDP-GlcNAc to the GlcNAcbeta1-2Manalpha1-3 arm of the core structure of N-linked glycans through a beta1-4 linkage and participates in the production of tri- and tetra-antennary N-linked sugar chains. Involved in glucose transport by mediating SLC2A2/GLUT2 glycosylation, thereby controlling cell-surface expression of SLC2A2 in pancreatic beta cells. The protein is Alpha-1,3-mannosyl-glycoprotein 4-beta-N-acetylglucosaminyltransferase A of Mus musculus (Mouse).